The following is a 150-amino-acid chain: Dual specificity protein phosphatase 23 (150 aa).

A Tyrosine-protein phosphatase domain is found at 7–150; sequence NFSWVLPGRL…AVFQFYQRTK (144 aa). C95 functions as the Phosphocysteine intermediate in the catalytic mechanism.

It belongs to the protein-tyrosine phosphatase family. Non-receptor class dual specificity subfamily. As to expression, widely expressed.

The protein resides in the cytoplasm. It is found in the cytosol. Its subcellular location is the nucleus. The enzyme catalyses O-phospho-L-tyrosyl-[protein] + H2O = L-tyrosyl-[protein] + phosphate. It carries out the reaction O-phospho-L-seryl-[protein] + H2O = L-seryl-[protein] + phosphate. It catalyses the reaction O-phospho-L-threonyl-[protein] + H2O = L-threonyl-[protein] + phosphate. Functionally, protein phosphatase that mediates dephosphorylation of proteins phosphorylated on Tyr and Ser/Thr residues. In vitro, it can dephosphorylate p44-ERK1 (MAPK3) but not p54 SAPK-beta (MAPK10) in vitro. Able to enhance activation of JNK and p38 (MAPK14). In Mus musculus (Mouse), this protein is Dual specificity protein phosphatase 23 (Dusp23).